The following is a 462-amino-acid chain: Glycogen synthase 1 (462 aa).

Position 6 (R6) interacts with ADP-alpha-D-glucose.

This sequence belongs to the glycosyltransferase 1 family. Bacterial/plant glycogen synthase subfamily.

The enzyme catalyses [(1-&gt;4)-alpha-D-glucosyl](n) + ADP-alpha-D-glucose = [(1-&gt;4)-alpha-D-glucosyl](n+1) + ADP + H(+). The protein operates within glycan biosynthesis; glycogen biosynthesis. Its function is as follows. Synthesizes alpha-1,4-glucan chains using ADP-glucose. The chain is Glycogen synthase 1 from Bradyrhizobium diazoefficiens (strain JCM 10833 / BCRC 13528 / IAM 13628 / NBRC 14792 / USDA 110).